A 264-amino-acid polypeptide reads, in one-letter code: Merozoite surface protein 2 (264 aa).

An N-terminal signal peptide occupies residues 1 to 20 (MKVIKTLSIINFFIFVTFNI). Residues Asn22 and Asn36 are each glycosylated (N-linked (GlcNAc...) asparagine). Residues 44-190 (ANEGSNTNSV…PQTAENENPA (147 aa)) form a polymorphic region region. The segment at 46-225 (EGSNTNSVGA…DSQKECTDGN (180 aa)) is disordered. 2 repeat units span residues 60–91 (ADTI…TPTA) and 92–123 (ADTI…TPTA). The 2 X 32 AA perfects repeats stretch occupies residues 60 to 123 (ADTIASGSQR…GESQTTTPTA (64 aa)). Positions 70-81 (STNSASTSTTNN) are enriched in low complexity. Residues 82-101 (GESQTTTPTAADTIASGSQR) are compositionally biased toward polar residues. The segment covering 102 to 145 (STNSASTSTTNNGESQTTTPTAADTPTTTESNSPSPPITTTESS) has biased composition (low complexity). Asn152 carries N-linked (GlcNAc...) asparagine glycosylation. Residues 154–166 (TDGKGEESEKQNE) are compositionally biased toward basic and acidic residues. 2 N-linked (GlcNAc...) asparagine glycosylation sites follow: Asn168 and Asn213. Cys221 and Cys229 are disulfide-bonded. Asn237 and Asn238 each carry an N-linked (GlcNAc...) asparagine glycan. Asn238 carries GPI-anchor amidated asparagine lipidation. The propeptide at 239-264 (SSNIASINKFVVLISATLVLSFAIFI) is removed in mature form.

It is found in the cell membrane. Functionally, may play a role in the merozoite attachment to the erythrocyte. This Plasmodium falciparum (isolate fid3 / India) protein is Merozoite surface protein 2.